A 302-amino-acid polypeptide reads, in one-letter code: Recombination-associated protein RdgC (302 aa).

It belongs to the RdgC family.

Its subcellular location is the cytoplasm. The protein localises to the nucleoid. In terms of biological role, may be involved in recombination. In Halorhodospira halophila (strain DSM 244 / SL1) (Ectothiorhodospira halophila (strain DSM 244 / SL1)), this protein is Recombination-associated protein RdgC.